The sequence spans 370 residues: Putative glutamate--cysteine ligase 2 (370 aa).

This sequence belongs to the glutamate--cysteine ligase type 2 family. YbdK subfamily.

It catalyses the reaction L-cysteine + L-glutamate + ATP = gamma-L-glutamyl-L-cysteine + ADP + phosphate + H(+). Its function is as follows. ATP-dependent carboxylate-amine ligase which exhibits weak glutamate--cysteine ligase activity. This is Putative glutamate--cysteine ligase 2 from Herminiimonas arsenicoxydans.